The sequence spans 235 residues: UPF0758 protein COPRO5265_1522 (235 aa).

One can recognise an MPN domain in the interval 109–235 (RITTPEDAIE…HVSLAREKLI (127 aa)). 3 residues coordinate Zn(2+): His184, His186, and Asp197. A JAMM motif motif is present at residues 184 to 197 (HNHPSGDPSPSRED).

It belongs to the UPF0758 family.

The sequence is that of UPF0758 protein COPRO5265_1522 from Coprothermobacter proteolyticus (strain ATCC 35245 / DSM 5265 / OCM 4 / BT).